A 466-amino-acid chain; its full sequence is DNA repair protein RadA (466 aa).

The C4-type zinc finger occupies 12 to 29 (CSECQHVAPKWVGRCANC). 100–107 (GDPGVGKS) contributes to the ATP binding site. The short motif at 261-265 (KNRFG) is the RadA KNRFG motif element. Residues 359-466 (DLYLSTVGGM…MREIAIAGAQ (108 aa)) form a lon-protease-like region.

This sequence belongs to the RecA family. RadA subfamily. Interacts with DisA.

Its function is as follows. DNA-dependent ATPase involved in processing of recombination intermediates, plays a role in repairing DNA breaks. Stimulates the branch migration of RecA-mediated strand transfer reactions, allowing the 3' invading strand to extend heteroduplex DNA faster. Binds ssDNA in the presence of ADP but not other nucleotides, has ATPase activity that is stimulated by ssDNA and various branched DNA structures, but inhibited by SSB. Does not have RecA's homology-searching function. Also inhibits the diadenylate cyclase activity of DisA. In Mycolicibacterium smegmatis (strain ATCC 700084 / mc(2)155) (Mycobacterium smegmatis), this protein is DNA repair protein RadA.